The sequence spans 239 residues: tRNA1(Val) (adenine(37)-N6)-methyltransferase (239 aa).

Belongs to the methyltransferase superfamily. tRNA (adenine-N(6)-)-methyltransferase family.

Its subcellular location is the cytoplasm. The catalysed reaction is adenosine(37) in tRNA1(Val) + S-adenosyl-L-methionine = N(6)-methyladenosine(37) in tRNA1(Val) + S-adenosyl-L-homocysteine + H(+). Functionally, specifically methylates the adenine in position 37 of tRNA(1)(Val) (anticodon cmo5UAC). The chain is tRNA1(Val) (adenine(37)-N6)-methyltransferase from Vibrio vulnificus (strain CMCP6).